An 87-amino-acid chain; its full sequence is Selenoprotein W (87 aa).

The cysteinyl-selenocysteine (Cys-Sec); redox-active cross-link spans 10–13 (CGAU). A non-standard amino acid (selenocysteine) is located at residue Sec-13. Cys-37 is modified (S-glutathionyl cysteine).

This sequence belongs to the SelWTH family. Selenoprotein W subfamily. Interacts with DPYSL2, PRDX1, YWHAB, YWHAG, HSP70 and HSP90. As to expression, detected in muscle, heart, tongue, brain, lung, spleen, kidney and liver. Highest levels expressed in muscle and heart whereas lowest levels detected in liver (at protein level).

It localises to the cytoplasm. Functionally, plays a role as a glutathione (GSH)-dependent antioxidant. May be involved in a redox-related process. May play a role in the myopathies of selenium deficiency. The polypeptide is Selenoprotein W (Ovis aries (Sheep)).